Consider the following 474-residue polypeptide: MSISNWITTAYLITSTSFQPLYGSFSDALGRRNCLFFANGAFTIGCLACGFSKNIYMLSFMRALTGIGGGGLITLSTIVNSDVIPSSKRGIFQAFQNLLLGFGAICGASFGGTIASSIGWRWCFLIQVPISVISSILMNYYVPNQKEYNRQNSSIFQNPGKILRDIDVMGSILIITGLTLQLLYLSLGCSTSKLSWTSPSVLLLLVGSVIILLLFILHERKTSARAIIPMELVNSSYSVVVLSISILVGFASYAYLFTLPLFFQIVLGDSTAKAGLRLTIPSLFTPVGSLITGFSMSKYNCLRLLLYIGISLMFLGNFLFLFIEKTSPNWLIGLFLIPANLGQGITFPTTLFTFIFMFSKSDQATATSTLYLFRSIGSVWGVAISAGVIQLSFAGLLRSNLKGLLDENKIKKLIVQLSANSSYIGSLHGEVKNTVIKSFDEATKRAHLMSTLLSSLALILCILKDNLAKPKTRR.

Topologically, residues 1 to 33 are cytoplasmic; that stretch reads MSISNWITTAYLITSTSFQPLYGSFSDALGRRN. The helical transmembrane segment at 34–54 threads the bilayer; sequence CLFFANGAFTIGCLACGFSKN. Topologically, residues 55–62 are vacuolar; it reads IYMLSFMR. Residues 63–85 form a helical membrane-spanning segment; sequence ALTGIGGGGLITLSTIVNSDVIP. Over 86–97 the chain is Cytoplasmic; sequence SSKRGIFQAFQN. Residues 98–118 form a helical membrane-spanning segment; the sequence is LLLGFGAICGASFGGTIASSI. Topologically, residues 119 to 121 are vacuolar; that stretch reads GWR. Residues 122–142 form a helical membrane-spanning segment; the sequence is WCFLIQVPISVISSILMNYYV. The Cytoplasmic portion of the chain corresponds to 143–167; it reads PNQKEYNRQNSSIFQNPGKILRDID. A helical transmembrane segment spans residues 168 to 188; it reads VMGSILIITGLTLQLLYLSLG. Residues 189–196 lie on the Vacuolar side of the membrane; sequence CSTSKLSW. The chain crosses the membrane as a helical span at residues 197-217; the sequence is TSPSVLLLLVGSVIILLLFIL. At 218 to 238 the chain is on the cytoplasmic side; the sequence is HERKTSARAIIPMELVNSSYS. A helical transmembrane segment spans residues 239–259; it reads VVVLSISILVGFASYAYLFTL. At 260–273 the chain is on the vacuolar side; sequence PLFFQIVLGDSTAK. Residues 274–294 form a helical membrane-spanning segment; that stretch reads AGLRLTIPSLFTPVGSLITGF. Residues 295–303 lie on the Cytoplasmic side of the membrane; sequence SMSKYNCLR. Residues 304-324 traverse the membrane as a helical segment; that stretch reads LLLYIGISLMFLGNFLFLFIE. The Vacuolar portion of the chain corresponds to 325-331; the sequence is KTSPNWL. A helical transmembrane segment spans residues 332–352; it reads IGLFLIPANLGQGITFPTTLF. At 353–375 the chain is on the cytoplasmic side; sequence TFIFMFSKSDQATATSTLYLFRS. Residues 376-396 traverse the membrane as a helical segment; that stretch reads IGSVWGVAISAGVIQLSFAGL. Residues 397-447 lie on the Vacuolar side of the membrane; it reads LRSNLKGLLDENKIKKLIVQLSANSSYIGSLHGEVKNTVIKSFDEATKRAH. Residue asparagine 420 is glycosylated (N-linked (GlcNAc...) asparagine). A helical transmembrane segment spans residues 448-468; the sequence is LMSTLLSSLALILCILKDNLA. At 469–474 the chain is on the cytoplasmic side; the sequence is KPKTRR.

Belongs to the major facilitator superfamily.

The protein localises to the vacuole membrane. Its function is as follows. Transporter required for vacuolar uptake of histidine, arginine and lysine and to a lesser extent tyrosine. The sequence is that of Vacuolar basic amino acid transporter 2 (VBA2) from Saccharomyces cerevisiae (strain ATCC 204508 / S288c) (Baker's yeast).